Reading from the N-terminus, the 120-residue chain is NAD(P)H-quinone oxidoreductase subunit 3, chloroplastic (120 aa).

Transmembrane regions (helical) follow at residues isoleucine 9–glycine 29, methionine 64–methionine 84, and valine 88–leucine 108.

It belongs to the complex I subunit 3 family. As to quaternary structure, NDH is composed of at least 16 different subunits, 5 of which are encoded in the nucleus.

The protein resides in the plastid. It is found in the chloroplast thylakoid membrane. It carries out the reaction a plastoquinone + NADH + (n+1) H(+)(in) = a plastoquinol + NAD(+) + n H(+)(out). It catalyses the reaction a plastoquinone + NADPH + (n+1) H(+)(in) = a plastoquinol + NADP(+) + n H(+)(out). Functionally, NDH shuttles electrons from NAD(P)H:plastoquinone, via FMN and iron-sulfur (Fe-S) centers, to quinones in the photosynthetic chain and possibly in a chloroplast respiratory chain. The immediate electron acceptor for the enzyme in this species is believed to be plastoquinone. Couples the redox reaction to proton translocation, and thus conserves the redox energy in a proton gradient. The chain is NAD(P)H-quinone oxidoreductase subunit 3, chloroplastic from Lobularia maritima (Sweet alyssum).